A 118-amino-acid chain; its full sequence is Small ribosomal subunit protein uS13 (118 aa).

A disordered region spans residues 94–118 (GLPVRGQRTQTNARTRKGPRRLARK). Basic residues predominate over residues 107–118 (RTRKGPRRLARK).

This sequence belongs to the universal ribosomal protein uS13 family. As to quaternary structure, part of the 30S ribosomal subunit. Forms a loose heterodimer with protein S19. Forms two bridges to the 50S subunit in the 70S ribosome.

In terms of biological role, located at the top of the head of the 30S subunit, it contacts several helices of the 16S rRNA. In the 70S ribosome it contacts the 23S rRNA (bridge B1a) and protein L5 of the 50S subunit (bridge B1b), connecting the 2 subunits; these bridges are implicated in subunit movement. Contacts the tRNAs in the A and P-sites. In Nitrosococcus oceani (strain ATCC 19707 / BCRC 17464 / JCM 30415 / NCIMB 11848 / C-107), this protein is Small ribosomal subunit protein uS13.